Consider the following 246-residue polypeptide: tRNA (guanine-N(1)-)-methyltransferase (246 aa).

S-adenosyl-L-methionine-binding positions include G112 and 131-136 (IGDYVL).

It belongs to the RNA methyltransferase TrmD family. As to quaternary structure, homodimer.

Its subcellular location is the cytoplasm. The catalysed reaction is guanosine(37) in tRNA + S-adenosyl-L-methionine = N(1)-methylguanosine(37) in tRNA + S-adenosyl-L-homocysteine + H(+). Its function is as follows. Specifically methylates guanosine-37 in various tRNAs. In Thermosipho melanesiensis (strain DSM 12029 / CIP 104789 / BI429), this protein is tRNA (guanine-N(1)-)-methyltransferase.